Consider the following 474-residue polypeptide: Iroquois-class homeodomain protein IRX-2 (474 aa).

The homeobox; TALE-type DNA-binding region spans 115–177 (DPAYRKNATR…NARRRLKKEN (63 aa)). Disordered stretches follow at residues 177–220 (NKMT…EDEG), 262–373 (EDLE…PGGS), and 420–461 (PGET…DTSE). Serine 187 carries the phosphoserine modification. The span at 196–210 (DASRSKEESSDKAQD) shows a compositional bias: basic and acidic residues. Over residues 262–275 (EDLEDEEDEEDECE) the composition is skewed to acidic residues. 2 stretches are compositionally biased toward low complexity: residues 293 to 305 (EAPLLSPAPEAAP) and 358 to 373 (PAAAAPASTGAPPGGS).

This sequence belongs to the TALE/IRO homeobox family. As to expression, expressed in specific and overlapping patterns with Irx1 and Irx3 in the developing and adult metanephric kidney. In the adult metanephros, renal expression is found in the loop of Henle in the S3 proximal tubule segment and in the thick ascending limb (TAL) of the distal tubule.

It localises to the nucleus. In Mus musculus (Mouse), this protein is Iroquois-class homeodomain protein IRX-2 (Irx2).